Reading from the N-terminus, the 339-residue chain is HTH-type transcriptional regulator SyrM 2 (339 aa).

In terms of domain architecture, HTH lysR-type spans 32–89 (VDLNLLVELEALLQYRNITHAAQHVGRSQPAMSRALSRLRDMFNDDLLVRGSSGLVPT). Residues 49–68 (ITHAAQHVGRSQPAMSRALS) constitute a DNA-binding region (H-T-H motif).

The protein belongs to the LysR transcriptional regulatory family.

Acts in trans to stimulate nod gene expression. The protein is HTH-type transcriptional regulator SyrM 2 (syrM2) of Sinorhizobium fredii (strain NBRC 101917 / NGR234).